A 645-amino-acid polypeptide reads, in one-letter code: 1,4-alpha-glucan branching enzyme GlgB (645 aa).

Aspartate 309 acts as the Nucleophile in catalysis. Catalysis depends on glutamate 352, which acts as the Proton donor. The tract at residues 619–645 is disordered; sequence VKTRKGSKKQDGSKTKVRSNVTSRGKR. Residues 636–645 show a composition bias toward polar residues; that stretch reads RSNVTSRGKR.

The protein belongs to the glycosyl hydrolase 13 family. GlgB subfamily. Monomer.

The enzyme catalyses Transfers a segment of a (1-&gt;4)-alpha-D-glucan chain to a primary hydroxy group in a similar glucan chain.. Its pathway is glycan biosynthesis; glycogen biosynthesis. Catalyzes the formation of the alpha-1,6-glucosidic linkages in glycogen by scission of a 1,4-alpha-linked oligosaccharide from growing alpha-1,4-glucan chains and the subsequent attachment of the oligosaccharide to the alpha-1,6 position. This Bacillus cereus (strain AH187) protein is 1,4-alpha-glucan branching enzyme GlgB.